A 148-amino-acid polypeptide reads, in one-letter code: Dermatopontin (148 aa).

Cysteines 14 and 40 form a disulfide. Asn-44 carries an N-linked (GlcNAc...) asparagine glycan. 2 cysteine pairs are disulfide-bonded: Cys-66–Cys-93 and Cys-103–Cys-147.

The protein belongs to the dermatopontin family. In terms of processing, the terminal mannose residues of the polysaccharide are 3-O-methylated. No tyrosine sulfation was detected.

Its subcellular location is the secreted. It localises to the extracellular space. The protein resides in the extracellular matrix. In terms of biological role, seems to mediate adhesion by cell surface integrin binding. This chain is Dermatopontin, found in Biomphalaria glabrata (Bloodfluke planorb).